Here is a 353-residue protein sequence, read N- to C-terminus: Melanin-concentrating hormone receptor 1 (353 aa).

The disordered stretch occupies residues 1–26 (MDLQTSLLSTGPNASNISDGQDNLTL). Residues 1-45 (MDLQTSLLSTGPNASNISDGQDNLTLPGSPPRTGSVSYINIIMPS) are Extracellular-facing. Residues asparagine 13, asparagine 16, and asparagine 23 are each glycosylated (N-linked (GlcNAc...) asparagine). Residues 46-66 (VFGTICLLGIVGNSTVIFAVV) traverse the membrane as a helical segment. The Cytoplasmic segment spans residues 67–79 (KKSKLHWCSNVPD). Residues 80-100 (IFIINLSVVDLLFLLGMPFMI) traverse the membrane as a helical segment. Over 101–116 (HQLMGNGVWHFGETMC) the chain is Extracellular. Residues cysteine 116 and cysteine 194 are joined by a disulfide bond. Residues 117-139 (TLITAMDANSQFTSTYILTAMTI) traverse the membrane as a helical segment. The Cytoplasmic portion of the chain corresponds to 140-161 (DRYLATVHPISSTKFRKPSMAT). Residues 162–182 (LVICLLWALSFISITPVWLYA) traverse the membrane as a helical segment. Residues 183-204 (RLIPFPGGAVGCGIRLPNPDTD) lie on the Extracellular side of the membrane. The chain crosses the membrane as a helical span at residues 205–225 (LYWFTLYQFFLAFALPFVVIT). Residues 226–256 (AAYVKILQRMTSSVAPASQRSIRLRTKRVTR) lie on the Cytoplasmic side of the membrane. A helical transmembrane segment spans residues 257-277 (TAIAICLVFFVCWAPYYVLQL). Over 278-294 (TQLSISRPTLTFVYLYN) the chain is Extracellular. A helical membrane pass occupies residues 295 to 315 (AAISLGYANSCLNPFVYIVLC). The Cytoplasmic portion of the chain corresponds to 316–353 (ETFRKRLVLSVKPAAQGQLRTVSNAQTADEERTESKGT).

It belongs to the G-protein coupled receptor 1 family. In terms of assembly, interacts with NCDN. As to expression, high level in the brain, moderate amounts in the eye and skeletal muscle, and small amounts in tongue and pituitary.

Its subcellular location is the cell membrane. Functionally, receptor for melanin-concentrating hormone, coupled to G proteins that inhibit adenylyl cyclase. This chain is Melanin-concentrating hormone receptor 1, found in Rattus norvegicus (Rat).